Reading from the N-terminus, the 1105-residue chain is uncharacterized protein (1105 aa).

Belongs to the mycobacterial PPE family.

This is an uncharacterized protein from Mycobacterium tuberculosis (strain CDC 1551 / Oshkosh).